Here is a 519-residue protein sequence, read N- to C-terminus: Carboxyl-terminal-processing peptidase 3, chloroplastic (519 aa).

The PDZ domain occupies 186 to 274 (YQSFRIGSDG…IKLKNVNGSG (89 aa)). Active-site charge relay system residues include Ser-407 and Lys-432.

Belongs to the peptidase S41A family.

It localises to the plastid. Its subcellular location is the chloroplast thylakoid lumen. It catalyses the reaction The enzyme shows specific recognition of a C-terminal tripeptide, Xaa-Yaa-Zaa, in which Xaa is preferably Ala or Leu, Yaa is preferably Ala or Tyr, and Zaa is preferably Ala, but then cleaves at a variable distance from the C-terminus. A typical cleavage is -Ala-Ala-|-Arg-Ala-Ala-Lys-Glu-Asn-Tyr-Ala-Leu-Ala-Ala.. Its function is as follows. Protease involved in the C-terminal processing of the chloroplastic D1 protein of photosystem II. This proteolytic processing is necessary to allow the light-driven assembly of the tetranuclear manganese cluster, which is responsible for photosynthetic water oxidation. The sequence is that of Carboxyl-terminal-processing peptidase 3, chloroplastic (CTPA3) from Arabidopsis thaliana (Mouse-ear cress).